The primary structure comprises 262 residues: Cyclin-dependent kinase inhibitor 1 (262 aa).

Residues 140-212 (SDVAEAGSEH…SAQQATRPKI (73 aa)) are disordered. The segment covering 160-169 (SGRDRERRET) has biased composition (basic and acidic residues). Positions 198–208 (SAATASAQQAT) are enriched in low complexity.

This sequence belongs to the CDI family. ICK/KRP subfamily.

In Oryza sativa subsp. indica (Rice), this protein is Cyclin-dependent kinase inhibitor 1 (KRP1).